Consider the following 29-residue polypeptide: Alpha-amylase inhibitor 2 (29 aa).

This sequence belongs to the protease inhibitor I6 (cereal trypsin/alpha-amylase inhibitor) family.

Its subcellular location is the secreted. Functionally, alpha-amylase inhibitor. The sequence is that of Alpha-amylase inhibitor 2 from Saussurea costus (Costus).